We begin with the raw amino-acid sequence, 420 residues long: Serine hydroxymethyltransferase (420 aa).

Residues L121 and 125-127 contribute to the (6S)-5,6,7,8-tetrahydrofolate site; that span reads GHL. Position 230 is an N6-(pyridoxal phosphate)lysine (K230). (6S)-5,6,7,8-tetrahydrofolate contacts are provided by residues E246 and 354–356; that span reads SPF.

Belongs to the SHMT family. Homodimer. Pyridoxal 5'-phosphate serves as cofactor.

Its subcellular location is the cytoplasm. The enzyme catalyses (6R)-5,10-methylene-5,6,7,8-tetrahydrofolate + glycine + H2O = (6S)-5,6,7,8-tetrahydrofolate + L-serine. The protein operates within one-carbon metabolism; tetrahydrofolate interconversion. It participates in amino-acid biosynthesis; glycine biosynthesis; glycine from L-serine: step 1/1. In terms of biological role, catalyzes the reversible interconversion of serine and glycine with tetrahydrofolate (THF) serving as the one-carbon carrier. This reaction serves as the major source of one-carbon groups required for the biosynthesis of purines, thymidylate, methionine, and other important biomolecules. Also exhibits THF-independent aldolase activity toward beta-hydroxyamino acids, producing glycine and aldehydes, via a retro-aldol mechanism. In Rickettsia peacockii (strain Rustic), this protein is Serine hydroxymethyltransferase.